We begin with the raw amino-acid sequence, 376 residues long: Inactive 2'-5'-oligoadenylate synthase 1B (376 aa).

Residues 1–351 (MEQDLRSIPA…VPTEVGVPMK (351 aa)) lie on the Cytoplasmic side of the membrane. Residues 352 to 370 (YLLCRIFWLLFWSLFHFIF) traverse the membrane as a helical; Anchor for type IV membrane protein segment. Topologically, residues 371–376 (GKTSSG) are extracellular.

Belongs to the 2-5A synthase family. Interacts with OSBPL1A and ABCF3. Highly expressed in lung, spleen and thymus. Also detected at lower levels in heart, kidney, liver, lung, skeletal muscle, testes, uterus and ovaries.

It localises to the endoplasmic reticulum membrane. Does not have 2'-5'-OAS activity, but can bind double-stranded RNA. The full-length protein displays antiviral activity against flaviviruses such as west Nile virus (WNV) via an alternative antiviral pathway independent of RNase L. The truncated form of the protein lacks antiviral activity. This Mus musculus (Mouse) protein is Inactive 2'-5'-oligoadenylate synthase 1B (Oas1b).